A 179-amino-acid polypeptide reads, in one-letter code: MEGEELIYHNIINEILVGYIKYYINDISEHELSPYQQQIKKILTYYDECLNKQVTITFSLTSAQEIKTQFTGVVTELFKDLINWGRICGFIVFSAKMAKYCKDANNHLESTVITTAYNFMKHNLLPWMISHGGQEEFLAFSLHSDIYSVIFNIKYFLSKFCNHMFFRSCVQLLRNCNLI.

The BH1 motif lies at 76-95; the sequence is ELFKDLINWGRICGFIVFSA. Residues 126–141 carry the BH2 motif; that stretch reads PWMISHGGQEEFLAFS.

Belongs to the Bcl-2 family. Interacts with host BECN1 (via BH3 homology domain); this interaction allows the virus to inhibit BECN1, and thus autophagy. Interacts with host BID. Interacts with host BAX.

The protein localises to the host mitochondrion. It is found in the host endoplasmic reticulum. Functionally, suppresses apoptosis in host cell to promote the viral replication. Has the ability to potentially bind to all the members of the proapoptotic Bcl-2 family. Inhibits autophagy by interacting with host Beclin 1 (BECN1). The protein is Apoptosis regulator Bcl-2 homolog of African swine fever virus (isolate Tick/South Africa/Pretoriuskop Pr4/1996) (ASFV).